The following is a 209-amino-acid chain: Probable GTP-binding protein EngB (209 aa).

Residues Glu24–Leu198 enclose the EngB-type G domain. GTP-binding positions include Gly32–Ser39, Gly59–Leu63, Asp77–Gly80, Thr144–Asp147, and Phe177–Ala179. Residues Ser39 and Thr61 each coordinate Mg(2+).

This sequence belongs to the TRAFAC class TrmE-Era-EngA-EngB-Septin-like GTPase superfamily. EngB GTPase family. The cofactor is Mg(2+).

Its function is as follows. Necessary for normal cell division and for the maintenance of normal septation. This is Probable GTP-binding protein EngB from Thioalkalivibrio sulfidiphilus (strain HL-EbGR7).